The primary structure comprises 364 residues: CCA-adding enzyme (364 aa).

ATP-binding residues include G19 and R22. CTP is bound by residues G19 and R22. Mg(2+) is bound by residues D32 and D34. Residues R102, R148, and R151 each contribute to the ATP site. R102, R148, and R151 together coordinate CTP.

This sequence belongs to the tRNA nucleotidyltransferase/poly(A) polymerase family. Bacterial CCA-adding enzyme type 2 subfamily. Mg(2+) serves as cofactor.

The catalysed reaction is a tRNA precursor + 2 CTP + ATP = a tRNA with a 3' CCA end + 3 diphosphate. It catalyses the reaction a tRNA with a 3' CCA end + 2 CTP + ATP = a tRNA with a 3' CCACCA end + 3 diphosphate. Catalyzes the addition and repair of the essential 3'-terminal CCA sequence in tRNAs without using a nucleic acid template. Adds these three nucleotides in the order of C, C, and A to the tRNA nucleotide-73, using CTP and ATP as substrates and producing inorganic pyrophosphate. tRNA 3'-terminal CCA addition is required both for tRNA processing and repair. Also involved in tRNA surveillance by mediating tandem CCA addition to generate a CCACCA at the 3' terminus of unstable tRNAs. While stable tRNAs receive only 3'-terminal CCA, unstable tRNAs are marked with CCACCA and rapidly degraded. The protein is CCA-adding enzyme of Bordetella pertussis (strain Tohama I / ATCC BAA-589 / NCTC 13251).